We begin with the raw amino-acid sequence, 702 residues long: Phosphoglycerol transferase I (702 aa).

Helical transmembrane passes span 5-24, 73-95, and 102-124; these read LLVS…RLAW, GYIA…VRIR, and GGGA…SPLY.

The protein belongs to the OpgB family.

The protein localises to the cell inner membrane. The catalysed reaction is a phosphatidylglycerol + a membrane-derived-oligosaccharide D-glucose = a 1,2-diacyl-sn-glycerol + a membrane-derived-oligosaccharide 6-(glycerophospho)-D-glucose.. Its pathway is glycan metabolism; osmoregulated periplasmic glucan (OPG) biosynthesis. Functionally, transfers a phosphoglycerol residue from phosphatidylglycerol to the membrane-bound nascent glucan backbones. This is Phosphoglycerol transferase I from Xanthomonas axonopodis pv. citri (strain 306).